The primary structure comprises 273 residues: Putative pyruvate, phosphate dikinase regulatory protein (273 aa).

153 to 160 (GVSRTSKS) contacts ADP.

The protein belongs to the pyruvate, phosphate/water dikinase regulatory protein family. PDRP subfamily.

The catalysed reaction is N(tele)-phospho-L-histidyl/L-threonyl-[pyruvate, phosphate dikinase] + ADP = N(tele)-phospho-L-histidyl/O-phospho-L-threonyl-[pyruvate, phosphate dikinase] + AMP + H(+). It catalyses the reaction N(tele)-phospho-L-histidyl/O-phospho-L-threonyl-[pyruvate, phosphate dikinase] + phosphate + H(+) = N(tele)-phospho-L-histidyl/L-threonyl-[pyruvate, phosphate dikinase] + diphosphate. Bifunctional serine/threonine kinase and phosphorylase involved in the regulation of the pyruvate, phosphate dikinase (PPDK) by catalyzing its phosphorylation/dephosphorylation. This chain is Putative pyruvate, phosphate dikinase regulatory protein, found in Ehrlichia chaffeensis (strain ATCC CRL-10679 / Arkansas).